Here is a 280-residue protein sequence, read N- to C-terminus: Lipase chaperone (280 aa).

The helical transmembrane segment at 5-22 (ALTIITIASGSLGAVYFL) threads the bilayer.

The protein belongs to the lipase chaperone family.

It is found in the cell inner membrane. Functionally, may be involved in the folding of the extracellular lipase during its passage through the periplasm. The sequence is that of Lipase chaperone (lifO) from Vibrio vulnificus (strain YJ016).